The primary structure comprises 160 residues: Transcription elongation factor GreA (160 aa).

A coiled-coil region spans residues 12 to 76 (EGVKKLEEEL…QLENMLKNAS (65 aa)).

The protein belongs to the GreA/GreB family.

Functionally, necessary for efficient RNA polymerase transcription elongation past template-encoded arresting sites. The arresting sites in DNA have the property of trapping a certain fraction of elongating RNA polymerases that pass through, resulting in locked ternary complexes. Cleavage of the nascent transcript by cleavage factors such as GreA or GreB allows the resumption of elongation from the new 3'terminus. GreA releases sequences of 2 to 3 nucleotides. This is Transcription elongation factor GreA from Clostridium botulinum (strain Kyoto / Type A2).